A 552-amino-acid chain; its full sequence is Arginine--tRNA ligase (552 aa).

The 'HIGH' region signature appears at 129 to 139; it reads ANPTGPVTLAS.

Belongs to the class-I aminoacyl-tRNA synthetase family. Monomer.

The protein localises to the cytoplasm. The catalysed reaction is tRNA(Arg) + L-arginine + ATP = L-arginyl-tRNA(Arg) + AMP + diphosphate. This Frankia alni (strain DSM 45986 / CECT 9034 / ACN14a) protein is Arginine--tRNA ligase.